Consider the following 274-residue polypeptide: Undecaprenyl-diphosphatase (274 aa).

A run of 8 helical transmembrane segments spans residues 4-24 (LLVIKAIIMGIVEGITELLPI), 46-66 (VVFEIFIQMGAMLAIVWEYRV), 86-106 (INVAIAFFPAALVGFLFSDFI), 109-129 (VLFSPYVVAGGFIVGGVIIMW), 145-165 (ISYADAFNVGLCQCLALIPGT), 188-208 (FSFFLAIPMIGAASLYALWEA), 214-234 (IEDMGILAIGFITSFFVTFAV), and 250-270 (FAWYRIAFGLLVLATAYTGVI).

It belongs to the UppP family.

It localises to the cell inner membrane. It carries out the reaction di-trans,octa-cis-undecaprenyl diphosphate + H2O = di-trans,octa-cis-undecaprenyl phosphate + phosphate + H(+). Functionally, catalyzes the dephosphorylation of undecaprenyl diphosphate (UPP). Confers resistance to bacitracin. The polypeptide is Undecaprenyl-diphosphatase (Cellvibrio japonicus (strain Ueda107) (Pseudomonas fluorescens subsp. cellulosa)).